A 137-amino-acid polypeptide reads, in one-letter code: Fluoride-specific ion channel FluC 4 (137 aa).

4 helical membrane passes run 20–40, 43–63, 83–103, and 110–130; these read AAIG…ILGA, LWGT…FATL, GLCG…LLVL, and ALAY…LGLI. The Na(+) site is built by G86 and T89.

This sequence belongs to the fluoride channel Fluc/FEX (TC 1.A.43) family.

The protein localises to the cell inner membrane. The catalysed reaction is fluoride(in) = fluoride(out). Its activity is regulated as follows. Na(+) is not transported, but it plays an essential structural role and its presence is essential for fluoride channel function. Its function is as follows. Fluoride-specific ion channel. Important for reducing fluoride concentration in the cell, thus reducing its toxicity. The polypeptide is Fluoride-specific ion channel FluC 4 (Brucella suis biovar 1 (strain 1330)).